Here is a 1148-residue protein sequence, read N- to C-terminus: Ice nucleation protein (1148 aa).

3 disordered regions span residues alanine 110 to isoleucine 131, tyrosine 222 to serine 256, and glycine 367 to leucine 394. Residues serine 114–proline 128 are compositionally biased toward low complexity. The octapeptide periodicity stretch occupies residues alanine 180–isoleucine 1099. Over residues glutamate 230–leucine 250 the composition is skewed to polar residues.

It belongs to the bacterial ice nucleation protein family.

It is found in the cell outer membrane. In terms of biological role, ice nucleation proteins enable bacteria to nucleate crystallization in supercooled water. This Pseudomonas syringae protein is Ice nucleation protein (inaK).